A 128-amino-acid polypeptide reads, in one-letter code: Protein C10 (128 aa).

This sequence belongs to the UPF0456 family.

The protein resides in the cytoplasm. The protein is Protein C10 of Xenopus tropicalis (Western clawed frog).